The sequence spans 1059 residues: Nonsense-mediated mRNA decay factor SMG7 (1059 aa).

TPR repeat units lie at residues 149-183 (DQQS…LGDL) and 184-217 (ARYK…WPAS). Residues 806 to 817 (SHVSPAHSQSTS) are compositionally biased toward polar residues. Disordered stretches follow at residues 806-826 (SHVS…KWSP), 927-955 (HLGP…SGNN), 987-1015 (SGKP…QVPT), and 1040-1059 (STQL…RHFV).

Interacts with EXA1. In terms of tissue distribution, expressed in flowers and at lower levels in stems and leaves.

The protein localises to the cytoplasm. The protein resides in the P-body. Functionally, plays multiple roles in growth and development. Involved in nonsense-mediated mRNA decay (NMD). May provide a link to the mRNA degradation machinery to initiate NMD and serve as an adapter for UPF proteins function. Required for meiotic progression through anaphase II of pollen mother cells. May counteract cyclin-dependent kinase (CDK) activity at the end of meiosis. May play a role in plant defense through its involvement in NMD. Together with EXA1, helps to restrict cell death induction during pathogen infection in a salicylic acid- (SA) and reactive oxygen species- (ROS) independent manner. This is Nonsense-mediated mRNA decay factor SMG7 from Arabidopsis thaliana (Mouse-ear cress).